A 462-amino-acid polypeptide reads, in one-letter code: ATP synthase subunit beta (462 aa).

151–158 (GGAGVGKT) provides a ligand contact to ATP.

The protein belongs to the ATPase alpha/beta chains family. F-type ATPases have 2 components, CF(1) - the catalytic core - and CF(0) - the membrane proton channel. CF(1) has five subunits: alpha(3), beta(3), gamma(1), delta(1), epsilon(1). CF(0) has four main subunits: a(1), b(1), b'(1) and c(9-12).

The protein localises to the cell inner membrane. It carries out the reaction ATP + H2O + 4 H(+)(in) = ADP + phosphate + 5 H(+)(out). Produces ATP from ADP in the presence of a proton gradient across the membrane. The catalytic sites are hosted primarily by the beta subunits. The chain is ATP synthase subunit beta from Chlorobium phaeobacteroides (strain DSM 266 / SMG 266 / 2430).